The primary structure comprises 242 residues: uncharacterized protein (242 aa).

The span at 57–67 (SPTSQKTSASG) shows a compositional bias: polar residues. The tract at residues 57–78 (SPTSQKTSASGQEEPDPLHDKS) is disordered. Residues 76–188 (DKSSGLIQRF…GYMSTPPPVK (113 aa)) enclose the DUF1279 domain. Residues 92-114 (YGKVMIPVHLLTSTMWFGTFYYA) form a helical membrane-spanning segment. The stretch at 188–237 (KEYLQEKMEETKERISGKMEETKDRFSERMEETKDKFNEKLQETKDKVSF) forms a coiled coil. Over residues 198–236 (TKERISGKMEETKDRFSERMEETKDKFNEKLQETKDKVS) the composition is skewed to basic and acidic residues. Positions 198 to 242 (TKERISGKMEETKDRFSERMEETKDKFNEKLQETKDKVSFRKKKE) are disordered.

It is found in the membrane. This is an uncharacterized protein from Danio rerio (Zebrafish).